A 125-amino-acid chain; its full sequence is ATP synthase epsilon chain (125 aa).

This sequence belongs to the ATPase epsilon chain family. F-type ATPases have 2 components, CF(1) - the catalytic core - and CF(0) - the membrane proton channel. CF(1) has five subunits: alpha(3), beta(3), gamma(1), delta(1), epsilon(1). CF(0) has three main subunits: a, b and c.

Its subcellular location is the cell inner membrane. Its function is as follows. Produces ATP from ADP in the presence of a proton gradient across the membrane. The protein is ATP synthase epsilon chain of Aliarcobacter butzleri (strain RM4018) (Arcobacter butzleri).